The primary structure comprises 111 residues: Denmotoxin (111 aa).

A signal peptide spans 1-19; it reads MKTLLLAVAVVAFVCLGSA. A propeptide spanning residues 20 to 34 is cleaved from the precursor; sequence DQLGLGRQQIDWGQG. At Gln-35 the chain carries Pyrrolidone carboxylic acid. 5 disulfides stabilise this stretch: Cys-44-Cys-68, Cys-47-Cys-55, Cys-61-Cys-87, Cys-91-Cys-102, and Cys-103-Cys-108.

In terms of assembly, monomer. As to expression, expressed by the venom gland.

The protein resides in the secreted. Its function is as follows. This bird-specific postsynaptic neurotoxin irreversibly binds and inhibits the chick muscle alpha-1-beta-1-gamma-delta (CHRNA1-CHRNB1-CHRNG-CHNRD) nicotinic acetylcholine receptor (nAChR) 100-fold more compared with the mouse receptor. The weak binding to mouse receptor is reversible. The polypeptide is Denmotoxin (Boiga dendrophila (Mangrove snake)).